We begin with the raw amino-acid sequence, 284 residues long: Tropomyosin (284 aa).

The interval Met1–Gln47 is disordered. The stretch at Met1 to Tyr284 forms a coiled coil. Over residues Lys12 to Lys38 the composition is skewed to basic and acidic residues.

It belongs to the tropomyosin family. As to quaternary structure, homodimer.

Its function is as follows. Tropomyosin, in association with the troponin complex, plays a central role in the calcium dependent regulation of muscle contraction. The polypeptide is Tropomyosin (Trichinella pseudospiralis (Parasitic roundworm)).